The sequence spans 205 residues: Ribosomal RNA large subunit methyltransferase E (205 aa).

The S-adenosyl-L-methionine site is built by glycine 50, tryptophan 52, aspartate 67, asparagine 83, and aspartate 111. The active-site Proton acceptor is lysine 151.

Belongs to the class I-like SAM-binding methyltransferase superfamily. RNA methyltransferase RlmE family.

The protein resides in the cytoplasm. The catalysed reaction is uridine(2552) in 23S rRNA + S-adenosyl-L-methionine = 2'-O-methyluridine(2552) in 23S rRNA + S-adenosyl-L-homocysteine + H(+). Its function is as follows. Specifically methylates the uridine in position 2552 of 23S rRNA at the 2'-O position of the ribose in the fully assembled 50S ribosomal subunit. The protein is Ribosomal RNA large subunit methyltransferase E of Thermoplasma acidophilum (strain ATCC 25905 / DSM 1728 / JCM 9062 / NBRC 15155 / AMRC-C165).